The primary structure comprises 321 residues: Ribose-phosphate pyrophosphokinase C (321 aa).

2 residues coordinate Mg(2+): D132 and D147. Positions 214–229 (SGKVAIIIGSIADTCE) are binding of phosphoribosylpyrophosphate.

Belongs to the ribose-phosphate pyrophosphokinase family. Mg(2+) is required as a cofactor.

Its subcellular location is the cytoplasm. It carries out the reaction D-ribose 5-phosphate + ATP = 5-phospho-alpha-D-ribose 1-diphosphate + AMP + H(+). It functions in the pathway metabolic intermediate biosynthesis; 5-phospho-alpha-D-ribose 1-diphosphate biosynthesis; 5-phospho-alpha-D-ribose 1-diphosphate from D-ribose 5-phosphate (route I): step 1/1. In Dictyostelium discoideum (Social amoeba), this protein is Ribose-phosphate pyrophosphokinase C (prsC).